The chain runs to 706 residues: Complement C1r-B subcomponent (706 aa).

Residues 1–16 (MWLFALLVTLFYGVEG) form the signal peptide. One can recognise a CUB 1 domain in the interval 17–140 (SIYLPQKLYG…KGFLAYYQAV (124 aa)). Ca(2+)-binding residues include glutamate 65, aspartate 73, and aspartate 118. A disulfide bridge connects residues cysteine 70 and cysteine 88. Asparagine 124 carries N-linked (GlcNAc...) asparagine glycosylation. Aspartate 141, leucine 142, and glutamate 144 together coordinate Ca(2+). Residues 141-189 (DLDECASQPNSVEEGLQPRCQHLCHNYVGGYFCSCHPGYELQKDGQSCQ) enclose the EGF-like; calcium-binding domain. Cystine bridges form between cysteine 145–cysteine 164, cysteine 160–cysteine 173, cysteine 175–cysteine 188, and cysteine 192–cysteine 219. Ca(2+)-binding residues include asparagine 166, tyrosine 167, and glycine 170. (3R)-3-hydroxyasparagine is present on asparagine 166. The CUB 2 domain maps to 192–304 (CSSELYTEPS…RGWKLHYTTE (113 aa)). Serine 205 is modified (phosphoserine; by CK2). Residue asparagine 220 is glycosylated (N-linked (GlcNAc...) asparagine). 4 residues coordinate Ca(2+): aspartate 242, aspartate 252, aspartate 289, and aspartate 293. Cysteine 249 and cysteine 267 are joined by a disulfide. 2 consecutive Sushi domains span residues 306–372 (IKCP…RCKI) and 373–448 (KNCG…RCLP). 5 disulfide bridges follow: cysteine 308–cysteine 357, cysteine 337–cysteine 370, cysteine 375–cysteine 428, cysteine 405–cysteine 446, and cysteine 450–cysteine 578. Residues 463 to 703 (IIGGQPARPG…YVDWIKKEMG (241 aa)) form the Peptidase S1 domain. Active-site charge relay system residues include histidine 501 and aspartate 558. The N-linked (GlcNAc...) asparagine glycan is linked to asparagine 582. 2 disulfides stabilise this stretch: cysteine 621–cysteine 640 and cysteine 651–cysteine 681. The active-site Charge relay system is serine 655.

The protein belongs to the peptidase S1 family. As to quaternary structure, core component of the complement C1 complex, a calcium-dependent complex composed of 1 molecule of the C1Q subcomplex, 2 molecules of C1R and 2 molecules of C1S. The C1Q subcomplex is composed 18 subunits: 3 chains of C1QA, C1QB, and C1QC trimerize to form 6 collagen-like triple helices connected to six globular ligand-recognition modules. Within the C1 complex, C1R is a dimer of identical chains, each of which is activated by cleavage into two chains, heavy and light, connected by disulfide bonds. In terms of processing, cleaved and activated by autocatalytic processing to generate Complement C1r subcomponent heavy and light chains that are connected by disulfide bonds. Post-translationally, the iron and 2-oxoglutarate dependent 3-hydroxylation of aspartate and asparagine is (R) stereospecific within EGF domains.

Its subcellular location is the secreted. The protein resides in the cell surface. The enzyme catalyses Selective cleavage of Lys(or Arg)-|-Ile bond in complement subcomponent C1s to form the active form of C1s (EC 3.4.21.42).. Its activity is regulated as follows. Activated by the C1Q subcomplex of the C1 complex following C1Q binding to immunoglobulins (IgG or IgM) complexed with antigens to form antigen-antibody complexes on the surface of pathogens. Immunoglobulin-binding promotes autoactivation of C1R, which results in the cleavage of the Arg-Ile bond in the catalytic domain. Its function is as follows. Serine protease component of the complement C1 complex, a multiprotein complex that initiates the classical pathway of the complement system, a cascade of proteins that leads to phagocytosis and breakdown of pathogens and signaling that strengthens the adaptive immune system. C1R catalyzes the first enzymatic step in the classical complement pathway: it is activated by the C1Q subcomplex of the C1 complex, which associates with IgG or IgM immunoglobulins complexed with antigens to form antigen-antibody complexes on the surface of pathogens. Immunoglobulin-binding promotes the autocatalytic cleavage and activation of C1R. Activated C1R then cleaves and activates C1S, the second protease of the classical complement pathway. It is unclear if C1R activates C1S within single, strained C1 complexes or between neighboring C1 complexes on surfaces. In Mus musculus (Mouse), this protein is Complement C1r-B subcomponent (C1rb).